Consider the following 151-residue polypeptide: Methylated-DNA--protein-cysteine methyltransferase (151 aa).

Residue cysteine 119 is the Nucleophile; methyl group acceptor of the active site.

Belongs to the MGMT family.

The protein localises to the cytoplasm. It catalyses the reaction a 6-O-methyl-2'-deoxyguanosine in DNA + L-cysteinyl-[protein] = S-methyl-L-cysteinyl-[protein] + a 2'-deoxyguanosine in DNA. The catalysed reaction is a 4-O-methyl-thymidine in DNA + L-cysteinyl-[protein] = a thymidine in DNA + S-methyl-L-cysteinyl-[protein]. Involved in the cellular defense against the biological effects of O6-methylguanine (O6-MeG) and O4-methylthymine (O4-MeT) in DNA. Repairs the methylated nucleobase in DNA by stoichiometrically transferring the methyl group to a cysteine residue in the enzyme. This is a suicide reaction: the enzyme is irreversibly inactivated. In Saccharolobus islandicus (strain L.S.2.15 / Lassen #1) (Sulfolobus islandicus), this protein is Methylated-DNA--protein-cysteine methyltransferase.